The sequence spans 443 residues: Glucose-6-phosphate isomerase (443 aa).

The Proton donor role is filled by E285. Active-site residues include H306 and K420.

Belongs to the GPI family.

Its subcellular location is the cytoplasm. It catalyses the reaction alpha-D-glucose 6-phosphate = beta-D-fructose 6-phosphate. The protein operates within carbohydrate biosynthesis; gluconeogenesis. It participates in carbohydrate degradation; glycolysis; D-glyceraldehyde 3-phosphate and glycerone phosphate from D-glucose: step 2/4. Functionally, catalyzes the reversible isomerization of glucose-6-phosphate to fructose-6-phosphate. This Staphylococcus aureus (strain NCTC 8325 / PS 47) protein is Glucose-6-phosphate isomerase.